The primary structure comprises 429 residues: MAKGIRSIRGFSDILPEQTPLWQFVESNIQATLEAYGYREIRLPIVEKTELFSRSIGEVTDIVEKEMYTFEDRNGDSLTLRPEGTAGCVRCGIQNGLFHGGQPRVWYAGPMFRHERPQKGRYRQFHQIGAEVYGESGPGVDAEMILMTARLLRCLGLEDVRLELNTLGTGEARAAHRAALVEYLQAHEDRLDDDARRRLHSNPLRILDTKNPDMQALVEQAPRLMDYLDEDSRSHFQAVCRVLDQAGVAYRVNPRLVRGLDYYSRTVFEWITDRLGAQGTVLAGGRYDTLVEQIGGKPTPAIGFALGLERLVSLLEESGISGPQSGPHAFVVSADSLRALPLVEGLRDRLPGLRLQMQTEGGSFRSQFKRADRSGAALALVLGEEELAEGRFGVKDLRGDAEQQRLDPEALSDYLARRWPELAATEVTD.

The protein belongs to the class-II aminoacyl-tRNA synthetase family. In terms of assembly, homodimer.

Its subcellular location is the cytoplasm. The catalysed reaction is tRNA(His) + L-histidine + ATP = L-histidyl-tRNA(His) + AMP + diphosphate + H(+). In Alkalilimnicola ehrlichii (strain ATCC BAA-1101 / DSM 17681 / MLHE-1), this protein is Histidine--tRNA ligase.